A 155-amino-acid polypeptide reads, in one-letter code: 6,7-dimethyl-8-ribityllumazine synthase (155 aa).

5-amino-6-(D-ribitylamino)uracil is bound by residues phenylalanine 22, 56-58 (AFE), and 80-82 (AVI). 85–86 (ST) serves as a coordination point for (2S)-2-hydroxy-3-oxobutyl phosphate. Residue histidine 88 is the Proton donor of the active site. Phenylalanine 113 is a binding site for 5-amino-6-(D-ribitylamino)uracil. Arginine 127 contributes to the (2S)-2-hydroxy-3-oxobutyl phosphate binding site.

It belongs to the DMRL synthase family.

The enzyme catalyses (2S)-2-hydroxy-3-oxobutyl phosphate + 5-amino-6-(D-ribitylamino)uracil = 6,7-dimethyl-8-(1-D-ribityl)lumazine + phosphate + 2 H2O + H(+). It functions in the pathway cofactor biosynthesis; riboflavin biosynthesis; riboflavin from 2-hydroxy-3-oxobutyl phosphate and 5-amino-6-(D-ribitylamino)uracil: step 1/2. Catalyzes the formation of 6,7-dimethyl-8-ribityllumazine by condensation of 5-amino-6-(D-ribitylamino)uracil with 3,4-dihydroxy-2-butanone 4-phosphate. This is the penultimate step in the biosynthesis of riboflavin. This Bifidobacterium longum subsp. infantis (strain ATCC 15697 / DSM 20088 / JCM 1222 / NCTC 11817 / S12) protein is 6,7-dimethyl-8-ribityllumazine synthase.